The primary structure comprises 987 residues: Ephrin type-B receptor 4 (987 aa).

A signal peptide spans 1 to 15 (MELRVLLCWASLAAA). Residues 16 to 539 (LEETLLNTKL…ESEGWREQLA (524 aa)) are Extracellular-facing. The 186-residue stretch at 17–202 (EETLLNTKLE…FYKKCAQLTV (186 aa)) folds into the Eph LBD domain. Disulfide bonds link Cys-61–Cys-184 and Cys-97–Cys-107. N-linked (GlcNAc...) asparagine glycans are attached at residues Asn-203, Asn-335, and Asn-426. Fibronectin type-III domains follow at residues 323–432 (PPSA…TDRE) and 436–529 (AVSD…TQLD). Residues 540 to 560 (LIAGTAVVGVVLVLVVIVVAV) form a helical membrane-spanning segment. Topologically, residues 561 to 987 (LCLRKQSNGR…GGTGGPAPQY (427 aa)) are cytoplasmic. The region spanning 615–899 (VKIEEVIGAG…ENGGASHPLL (285 aa)) is the Protein kinase domain. Residues 621–629 (IGAGEFGEV) and Lys-647 each bind ATP. The Proton acceptor role is filled by Asp-740. Phosphoserine is present on residues Ser-769, Ser-770, Ser-911, and Ser-943. The region spanning 907–971 (SAFGSVGEWL…LASVQHMKSQ (65 aa)) is the SAM domain. The segment at 965–987 (VQHMKSQAKPGTPGGTGGPAPQY) is disordered. A Phosphothreonine modification is found at Thr-976. The span at 976-987 (TPGGTGGPAPQY) shows a compositional bias: gly residues. The PDZ-binding motif lies at 985 to 987 (PQY). Tyr-987 carries the post-translational modification Phosphotyrosine.

This sequence belongs to the protein kinase superfamily. Tyr protein kinase family. Ephrin receptor subfamily. In terms of assembly, heterotetramer upon binding of the ligand. The heterotetramer is composed of an ephrin dimer and a receptor dimer. Oligomerization is probably required to induce biological responses. Interacts with RASA1; the interaction depends on EPHB4 tyrosine-phosphorylation. In terms of processing, phosphorylated; autophosphorylation is stimulated by EFNB2. In terms of tissue distribution, abundantly expressed in placenta but also detected in kidney, liver, lung, pancreas, skeletal muscle and heart. Expressed in primitive and myeloid, but not lymphoid, hematopoietic cells. Also observed in cell lines derived from liver, breast, colon, lung, melanocyte and cervix.

It localises to the cell membrane. The enzyme catalyses L-tyrosyl-[protein] + ATP = O-phospho-L-tyrosyl-[protein] + ADP + H(+). Its function is as follows. Receptor tyrosine kinase which binds promiscuously transmembrane ephrin-B family ligands residing on adjacent cells, leading to contact-dependent bidirectional signaling into neighboring cells. The signaling pathway downstream of the receptor is referred to as forward signaling while the signaling pathway downstream of the ephrin ligand is referred to as reverse signaling. Together with its cognate ligand/functional ligand EFNB2 it is involved in the regulation of cell adhesion and migration, and plays a central role in heart morphogenesis, angiogenesis and blood vessel remodeling and permeability. EPHB4-mediated forward signaling controls cellular repulsion and segregation from EFNB2-expressing cells. The chain is Ephrin type-B receptor 4 (EPHB4) from Homo sapiens (Human).